A 213-amino-acid chain; its full sequence is Orotate phosphoribosyltransferase (213 aa).

Residue lysine 26 coordinates 5-phospho-alpha-D-ribose 1-diphosphate. 34–35 is a binding site for orotate; the sequence is FF. Residues 72–73, arginine 99, lysine 100, lysine 103, histidine 105, and 124–132 contribute to the 5-phospho-alpha-D-ribose 1-diphosphate site; these read YK and DDVITAGTA. Threonine 128 and arginine 156 together coordinate orotate.

It belongs to the purine/pyrimidine phosphoribosyltransferase family. PyrE subfamily. In terms of assembly, homodimer. Mg(2+) is required as a cofactor.

The enzyme catalyses orotidine 5'-phosphate + diphosphate = orotate + 5-phospho-alpha-D-ribose 1-diphosphate. The protein operates within pyrimidine metabolism; UMP biosynthesis via de novo pathway; UMP from orotate: step 1/2. In terms of biological role, catalyzes the transfer of a ribosyl phosphate group from 5-phosphoribose 1-diphosphate to orotate, leading to the formation of orotidine monophosphate (OMP). The polypeptide is Orotate phosphoribosyltransferase (Klebsiella pneumoniae (strain 342)).